The following is a 526-amino-acid chain: Cytochrome P450 monooxygenase milC (526 aa).

A helical transmembrane segment spans residues 2–20; it reads AIHAAYIFIAATLIALYVA. Cys-470 provides a ligand contact to heme.

It belongs to the cytochrome P450 family. Heme serves as cofactor.

It localises to the membrane. The enzyme catalyses cordypyrone A + reduced [NADPH--hemoprotein reductase] + O2 = cordypyrone B + oxidized [NADPH--hemoprotein reductase] + H2O + H(+). Its pathway is secondary metabolite biosynthesis. Functionally, cytochrome P450 monooxygenase; part of the gene cluster that mediates the biosynthesis of cordypyrones A and B, 2 pyrones that show modest activities against pathogenic bacteria including methicillin-resistant Staphylococcus aureus (MRSA), Mycobacterium tuberculosis and Bacillus cereus. The HR-PKS milA catalyzes the formation of cordypyrones A via condensation of one acetate with 10 malonate units. Since milA lacks an enoyl reductase domain, the 2 beta-keto processing domains DH and KR of milA collaborate with the trans-enoyl reductase milB to catalyze the different levels of reduction. The cytochrome P450 monooxygenase milC then hydroxylates the C-22 of cordypyrones A to yield cordypyrones B. The sequence is that of Cytochrome P450 monooxygenase milC from Cordyceps militaris (strain CM01) (Caterpillar fungus).